Here is a 365-residue protein sequence, read N- to C-terminus: Caffeic acid 3-O-methyltransferase (365 aa).

Position 130–136 (130–136 (MNQDKVL)) interacts with substrate. A substrate binding region spans residues 162–180 (AFEYHGTDPRFNKVFNRGM). S-adenosyl-L-methionine contacts are provided by Gly-208, Asp-231, Asp-251, Met-252, and Lys-265. His-269 (proton acceptor) is an active-site residue.

This sequence belongs to the class I-like SAM-binding methyltransferase superfamily. Cation-independent O-methyltransferase family. COMT subfamily. Homodimer.

It carries out the reaction (E)-caffeate + S-adenosyl-L-methionine = (E)-ferulate + S-adenosyl-L-homocysteine + H(+). Its pathway is aromatic compound metabolism; phenylpropanoid biosynthesis. Functionally, catalyzes the conversion of caffeic acid to ferulic acid and of 5-hydroxyferulic acid to sinapic acid. The resulting products may subsequently be converted to the corresponding alcohols that are incorporated into lignins. The polypeptide is Caffeic acid 3-O-methyltransferase (COMT1) (Prunus dulcis (Almond)).